The chain runs to 170 residues: Large ribosomal subunit protein uL10 (170 aa).

Belongs to the universal ribosomal protein uL10 family. As to quaternary structure, part of the ribosomal stalk of the 50S ribosomal subunit. The N-terminus interacts with L11 and the large rRNA to form the base of the stalk. The C-terminus forms an elongated spine to which L12 dimers bind in a sequential fashion forming a multimeric L10(L12)X complex.

Its function is as follows. Forms part of the ribosomal stalk, playing a central role in the interaction of the ribosome with GTP-bound translation factors. The chain is Large ribosomal subunit protein uL10 (rplJ) from Chlamydia pneumoniae (Chlamydophila pneumoniae).